Reading from the N-terminus, the 227-residue chain is Ribosomal RNA large subunit methyltransferase E (227 aa).

Residues glycine 78, tryptophan 80, aspartate 103, aspartate 119, and aspartate 143 each contribute to the S-adenosyl-L-methionine site. Residue lysine 183 is the Proton acceptor of the active site.

Belongs to the class I-like SAM-binding methyltransferase superfamily. RNA methyltransferase RlmE family.

It is found in the cytoplasm. It carries out the reaction uridine(2552) in 23S rRNA + S-adenosyl-L-methionine = 2'-O-methyluridine(2552) in 23S rRNA + S-adenosyl-L-homocysteine + H(+). Its function is as follows. Specifically methylates the uridine in position 2552 of 23S rRNA at the 2'-O position of the ribose in the fully assembled 50S ribosomal subunit. This is Ribosomal RNA large subunit methyltransferase E from Rickettsia felis (strain ATCC VR-1525 / URRWXCal2) (Rickettsia azadi).